Consider the following 115-residue polypeptide: uncharacterized protein (115 aa).

2 helical membrane passes run 15–35 (FSTQ…EVLF) and 52–72 (FDGV…YYSI).

The protein resides in the membrane. This is an uncharacterized protein from Saccharomyces cerevisiae (strain ATCC 204508 / S288c) (Baker's yeast).